The primary structure comprises 195 residues: Imidazoleglycerol-phosphate dehydratase (195 aa).

Belongs to the imidazoleglycerol-phosphate dehydratase family.

Its subcellular location is the cytoplasm. It catalyses the reaction D-erythro-1-(imidazol-4-yl)glycerol 3-phosphate = 3-(imidazol-4-yl)-2-oxopropyl phosphate + H2O. It functions in the pathway amino-acid biosynthesis; L-histidine biosynthesis; L-histidine from 5-phospho-alpha-D-ribose 1-diphosphate: step 6/9. This is Imidazoleglycerol-phosphate dehydratase from Endomicrobium trichonymphae.